The primary structure comprises 193 residues: dCTP deaminase (193 aa).

Residues 110-115 (RSSLAR), Asp128, 136-138 (VLE), Tyr171, Lys178, and Gln182 contribute to the dCTP site. Residue Glu138 is the Proton donor/acceptor of the active site.

It belongs to the dCTP deaminase family. As to quaternary structure, homotrimer.

The catalysed reaction is dCTP + H2O + H(+) = dUTP + NH4(+). Its pathway is pyrimidine metabolism; dUMP biosynthesis; dUMP from dCTP (dUTP route): step 1/2. In terms of biological role, catalyzes the deamination of dCTP to dUTP. The protein is dCTP deaminase of Buchnera aphidicola subsp. Schizaphis graminum (strain Sg).